The following is a 259-amino-acid chain: Ubiquinone/menaquinone biosynthesis C-methyltransferase UbiE (259 aa).

S-adenosyl-L-methionine contacts are provided by residues threonine 82, aspartate 103, and 131-132 (NA).

The protein belongs to the class I-like SAM-binding methyltransferase superfamily. MenG/UbiE family.

It carries out the reaction a 2-demethylmenaquinol + S-adenosyl-L-methionine = a menaquinol + S-adenosyl-L-homocysteine + H(+). The catalysed reaction is a 2-methoxy-6-(all-trans-polyprenyl)benzene-1,4-diol + S-adenosyl-L-methionine = a 5-methoxy-2-methyl-3-(all-trans-polyprenyl)benzene-1,4-diol + S-adenosyl-L-homocysteine + H(+). It participates in quinol/quinone metabolism; menaquinone biosynthesis; menaquinol from 1,4-dihydroxy-2-naphthoate: step 2/2. The protein operates within cofactor biosynthesis; ubiquinone biosynthesis. In terms of biological role, methyltransferase required for the conversion of demethylmenaquinol (DMKH2) to menaquinol (MKH2) and the conversion of 2-polyprenyl-6-methoxy-1,4-benzoquinol (DDMQH2) to 2-polyprenyl-3-methyl-6-methoxy-1,4-benzoquinol (DMQH2). The sequence is that of Ubiquinone/menaquinone biosynthesis C-methyltransferase UbiE from Agrobacterium fabrum (strain C58 / ATCC 33970) (Agrobacterium tumefaciens (strain C58)).